The sequence spans 438 residues: 3-phosphoshikimate 1-carboxyvinyltransferase (438 aa).

3-phosphoshikimate is bound by residues Lys-20, Ser-21, and Arg-25. Lys-20 serves as a coordination point for phosphoenolpyruvate. Gly-90 and Arg-118 together coordinate phosphoenolpyruvate. 3-phosphoshikimate contacts are provided by Ser-163, Ser-164, Gln-165, Ser-191, Asp-320, and Lys-347. Gln-165 contributes to the phosphoenolpyruvate binding site. Catalysis depends on Asp-320, which acts as the Proton acceptor. Arg-351 and Arg-392 together coordinate phosphoenolpyruvate.

It belongs to the EPSP synthase family. Monomer.

The protein localises to the cytoplasm. It catalyses the reaction 3-phosphoshikimate + phosphoenolpyruvate = 5-O-(1-carboxyvinyl)-3-phosphoshikimate + phosphate. Its pathway is metabolic intermediate biosynthesis; chorismate biosynthesis. Its function is as follows. Catalyzes the transfer of the enolpyruvyl moiety of phosphoenolpyruvate (PEP) to the 5-hydroxyl of shikimate-3-phosphate (S3P) to produce enolpyruvyl shikimate-3-phosphate and inorganic phosphate. The chain is 3-phosphoshikimate 1-carboxyvinyltransferase from Natronomonas pharaonis (strain ATCC 35678 / DSM 2160 / CIP 103997 / JCM 8858 / NBRC 14720 / NCIMB 2260 / Gabara) (Halobacterium pharaonis).